A 399-amino-acid chain; its full sequence is Mannan endo-1,4-beta-mannosidase 4 (399 aa).

Residues 1 to 26 (MNNSIILIFVAILIIFPNEFSKPTRA) form the signal peptide. Residues Trp-88 and Asn-203 each coordinate substrate. The Proton donor role is filled by Glu-204. Tyr-279 is a binding site for substrate. The active-site Nucleophile is Glu-318. Cys-347 and Cys-354 are oxidised to a cystine. Residue Trp-360 participates in substrate binding.

The protein belongs to the glycosyl hydrolase 5 (cellulase A) family. As to expression, expressed in flowers and fruit pericarp.

It localises to the secreted. It catalyses the reaction Random hydrolysis of (1-&gt;4)-beta-D-mannosidic linkages in mannans, galactomannans and glucomannans.. Its function is as follows. Possesses endo-beta-mannanase and mannan transglycosylase activities. May be involved in cell wall degradation during fruit ripening. This is Mannan endo-1,4-beta-mannosidase 4 (MAN4) from Solanum lycopersicum (Tomato).